Reading from the N-terminus, the 428-residue chain is Probable mannosyltransferase YUR1 (428 aa).

At Met1–Lys3 the chain is on the cytoplasmic side. Residues Gly4–Phe24 traverse the membrane as a helical; Signal-anchor for type II membrane protein segment. The interval Gly25–His88 is stem region. The Lumenal portion of the chain corresponds to Gly25–Ile428. N-linked (GlcNAc...) asparagine glycans are attached at residues Asn77, Asn82, Asn92, and Asn167. The segment at Leu89–Ile428 is catalytic. Glu313 (nucleophile) is an active-site residue. Asn414 carries an N-linked (GlcNAc...) asparagine glycan.

It belongs to the glycosyltransferase 15 family.

Its subcellular location is the golgi apparatus membrane. It participates in protein modification; protein glycosylation. In terms of biological role, possible glycosyltransferase involved in N-linked glycosylation. Transfers an alpha-D-mannosyl residue from GDP-mannose into lipid-linked oligosaccharide, forming an alpha-(1-&gt;2)-D-mannosyl-D-mannose linkage. The protein is Probable mannosyltransferase YUR1 (YUR1) of Saccharomyces cerevisiae (strain ATCC 204508 / S288c) (Baker's yeast).